The chain runs to 381 residues: Cytochrome b (381 aa).

A run of 4 helical transmembrane segments spans residues 33 to 53 (FGSLLGICLIIQILTGLFLAM), 77 to 98 (WLLRNLHANGASMFFMCLFLHV), 113 to 133 (WNIGVILLLTVMATAFVGYVL), and 178 to 198 (FFAFHFILPFIITALAVVHLL). Heme b is bound by residues His83 and His97. Heme b is bound by residues His182 and His196. Residue His201 coordinates a ubiquinone. Helical transmembrane passes span 226–246 (IKDALGLMLLLLMLLLLALFS), 288–308 (LGGVLALLASILILLIIPLLH), 320–340 (ISQTLFWILTANLITLTWIGG), and 347–367 (FIIIGQLAPMLYFLLILVLMP).

This sequence belongs to the cytochrome b family. The cytochrome bc1 complex contains 11 subunits: 3 respiratory subunits (MT-CYB, CYC1 and UQCRFS1), 2 core proteins (UQCRC1 and UQCRC2) and 6 low-molecular weight proteins (UQCRH/QCR6, UQCRB/QCR7, UQCRQ/QCR8, UQCR10/QCR9, UQCR11/QCR10 and a cleavage product of UQCRFS1). This cytochrome bc1 complex then forms a dimer. Heme b serves as cofactor.

It is found in the mitochondrion inner membrane. Its function is as follows. Component of the ubiquinol-cytochrome c reductase complex (complex III or cytochrome b-c1 complex) that is part of the mitochondrial respiratory chain. The b-c1 complex mediates electron transfer from ubiquinol to cytochrome c. Contributes to the generation of a proton gradient across the mitochondrial membrane that is then used for ATP synthesis. This is Cytochrome b (MT-CYB) from Pseudantechinus bilarni (Sandstone dibbler).